The following is a 528-amino-acid chain: Calcium-dependent protein kinase 13 (528 aa).

Residue Gly2 is the site of N-myristoyl glycine attachment. A compositionally biased stretch (basic and acidic residues) spans 17–32; it reads KSNYSGHDHARKDAAG. Residues 17 to 37 are disordered; the sequence is KSNYSGHDHARKDAAGGKKSA. At Ser43 the chain carries Phosphoserine. Positions 54 to 312 constitute a Protein kinase domain; the sequence is YLLDRELGRG…AKQVLEHPWI (259 aa). Residues 60–68 and Lys83 contribute to the ATP site; that span reads LGRGEFGVT. Asp178 (proton acceptor) is an active-site residue. Residue Ser218 is modified to Phosphoserine. The interval 318-348 is autoinhibitory domain; sequence APNVPLGDVVKSRLKQFSVMNRFKRKALRVI. EF-hand domains are found at residues 355 to 390, 391 to 426, 427 to 462, and 463 to 498; these read EEVE…FSTQ, LAES…LQKV, ANDE…DGGD, and DCVD…GTDW. Ca(2+) contacts are provided by Asp368, Asp370, Asp372, Glu379, Asp404, Thr410, Glu415, Asp440, Asp442, Asn444, Tyr446, Glu451, Asp476, Asp478, Asp480, and Arg482. Phosphoserine is present on Ser484. Glu487 lines the Ca(2+) pocket. Residue Ser522 is modified to Phosphoserine.

Belongs to the protein kinase superfamily. Ser/Thr protein kinase family. CDPK subfamily.

The protein localises to the cell membrane. It carries out the reaction L-seryl-[protein] + ATP = O-phospho-L-seryl-[protein] + ADP + H(+). The catalysed reaction is L-threonyl-[protein] + ATP = O-phospho-L-threonyl-[protein] + ADP + H(+). Activated by calcium. Autophosphorylation may play an important role in the regulation of the kinase activity. In terms of biological role, may play a role in signal transduction pathways that involve calcium as a second messenger. The protein is Calcium-dependent protein kinase 13 (CPK13) of Arabidopsis thaliana (Mouse-ear cress).